Here is a 183-residue protein sequence, read N- to C-terminus: Ribosome rescue factor SmrB (183 aa).

The Smr domain occupies 98 to 173 (LDLHGLTQLQ…GDAALLVLIE (76 aa)).

It belongs to the SmrB family. In terms of assembly, associates with collided ribosomes, but not with correctly translating polysomes.

Functionally, acts as a ribosome collision sensor. Detects stalled/collided disomes (pairs of ribosomes where the leading ribosome is stalled and a second ribosome has collided with it) and endonucleolytically cleaves mRNA at the 5' boundary of the stalled ribosome. Stalled/collided disomes form a new interface (primarily via the 30S subunits) that binds SmrB. Cleaved mRNA becomes available for tmRNA ligation, leading to ribosomal subunit dissociation and rescue of stalled ribosomes. The sequence is that of Ribosome rescue factor SmrB from Escherichia coli O157:H7.